The primary structure comprises 1935 residues: Myosin-7 (1935 aa).

A Myosin N-terminal SH3-like domain is found at 32 to 81 (DLKKDVYVPDDKEEFVKAKILSREGGKVTAETEHGKTVTVKEDQVLQQNP). The Myosin motor domain occupies 85-778 (DKIEDMAMLT…LLGLLEEMRD (694 aa)). Lys129 is subject to N6,N6,N6-trimethyllysine. Residue 178-185 (GESGAGKT) participates in ATP binding. At Thr378 the chain carries Phosphothreonine. Actin-binding stretches follow at residues 655–677 (LNKL…IPNE) and 757–771 (KFGH…GLLG). The IQ domain occupies 781–810 (LSRIITRIQAQSRGVLSRMEFKKLLERRDS). A coiled-coil region spans residues 839–1935 (LLKSAETEKE…DIGTKGLNEE (1097 aa)). A phosphoserine mark is found at Ser1137 and Ser1269. Thr1282 is subject to Phosphothreonine. Tyr1308 carries the phosphotyrosine modification. Thr1309 carries the post-translational modification Phosphothreonine. Position 1510 is a phosphoserine (Ser1510). A Phosphothreonine modification is found at Thr1513. The disordered stretch occupies residues 1907–1935 (EERADIAESQVNKLRAKSRDIGTKGLNEE). Residues 1923-1935 (KSRDIGTKGLNEE) are compositionally biased toward basic and acidic residues.

Belongs to the TRAFAC class myosin-kinesin ATPase superfamily. Myosin family. In terms of assembly, muscle myosin is a hexameric protein that consists of 2 heavy chain subunits (MHC), 2 alkali light chain subunits (MLC) and 2 regulatory light chain subunits (MLC-2). Interacts with ECPAS. Interacts (via C-terminus) with LRRC39.

It is found in the cytoplasm. It localises to the myofibril. Its subcellular location is the sarcomere. In terms of biological role, myosins are actin-based motor molecules with ATPase activity essential for muscle contraction. Forms regular bipolar thick filaments that, together with actin thin filaments, constitute the fundamental contractile unit of skeletal and cardiac muscle. This Sus scrofa (Pig) protein is Myosin-7 (MYH7).